A 308-amino-acid polypeptide reads, in one-letter code: HPr kinase/phosphorylase (308 aa).

Active-site residues include histidine 138 and lysine 159. Residue 153–160 (GESGLGKS) participates in ATP binding. Serine 160 contacts Mg(2+). Aspartate 177 serves as the catalytic Proton acceptor; for phosphorylation activity. Proton donor; for dephosphorylation activity. The interval 201–210 (LEVRGLGLLD) is important for the catalytic mechanism of both phosphorylation and dephosphorylation. Glutamate 202 is a binding site for Mg(2+). Arginine 243 is an active-site residue. An important for the catalytic mechanism of dephosphorylation region spans residues 264 to 269 (QVAAGR).

This sequence belongs to the HPrK/P family. In terms of assembly, homohexamer. It depends on Mg(2+) as a cofactor.

It catalyses the reaction [HPr protein]-L-serine + ATP = [HPr protein]-O-phospho-L-serine + ADP + H(+). It carries out the reaction [HPr protein]-O-phospho-L-serine + phosphate + H(+) = [HPr protein]-L-serine + diphosphate. Functionally, catalyzes the ATP- as well as the pyrophosphate-dependent phosphorylation of a specific serine residue in HPr, a phosphocarrier protein of the phosphoenolpyruvate-dependent sugar phosphotransferase system (PTS). HprK/P also catalyzes the pyrophosphate-producing, inorganic phosphate-dependent dephosphorylation (phosphorolysis) of seryl-phosphorylated HPr (P-Ser-HPr). This Bordetella bronchiseptica (strain ATCC BAA-588 / NCTC 13252 / RB50) (Alcaligenes bronchisepticus) protein is HPr kinase/phosphorylase.